The primary structure comprises 429 residues: Adenylosuccinate synthetase (429 aa).

GTP contacts are provided by residues 12 to 18 (GDEGKGK) and 40 to 42 (GHT). Aspartate 13 acts as the Proton acceptor in catalysis. 2 residues coordinate Mg(2+): aspartate 13 and glycine 40. Residues 13 to 16 (DEGK), 38 to 41 (NAGH), threonine 128, arginine 142, glutamine 223, threonine 238, and arginine 302 contribute to the IMP site. Histidine 41 (proton donor) is an active-site residue. Substrate is bound at residue 298 to 304 (VNTGRPR). GTP is bound by residues arginine 304, 330–332 (KLD), and 412–414 (GVG).

Belongs to the adenylosuccinate synthetase family. As to quaternary structure, homodimer. Mg(2+) serves as cofactor.

Its subcellular location is the cytoplasm. It catalyses the reaction IMP + L-aspartate + GTP = N(6)-(1,2-dicarboxyethyl)-AMP + GDP + phosphate + 2 H(+). Its pathway is purine metabolism; AMP biosynthesis via de novo pathway; AMP from IMP: step 1/2. Functionally, plays an important role in the de novo pathway of purine nucleotide biosynthesis. Catalyzes the first committed step in the biosynthesis of AMP from IMP. The polypeptide is Adenylosuccinate synthetase (Arthrobacter sp. (strain FB24)).